The sequence spans 235 residues: 7-cyano-7-deazaguanine synthase (235 aa).

11 to 21 (FSGGQDSTTCV) provides a ligand contact to ATP. Residues C199, C214, C217, and C220 each coordinate Zn(2+).

The protein belongs to the QueC family. Zn(2+) is required as a cofactor.

The catalysed reaction is 7-carboxy-7-deazaguanine + NH4(+) + ATP = 7-cyano-7-deazaguanine + ADP + phosphate + H2O + H(+). The protein operates within purine metabolism; 7-cyano-7-deazaguanine biosynthesis. Its function is as follows. Catalyzes the ATP-dependent conversion of 7-carboxy-7-deazaguanine (CDG) to 7-cyano-7-deazaguanine (preQ(0)). The sequence is that of 7-cyano-7-deazaguanine synthase from Janthinobacterium sp. (strain Marseille) (Minibacterium massiliensis).